The chain runs to 125 residues: Small ribosomal subunit protein eS8 (125 aa).

A disordered region spans residues 1–36 (MKDQGRSTRKRTGGRLHDVSKKKRHQLGREPAETTV). Residues 7 to 26 (STRKRTGGRLHDVSKKKRHQ) show a composition bias toward basic residues. Residues 27–36 (LGREPAETTV) show a composition bias toward basic and acidic residues.

The protein belongs to the eukaryotic ribosomal protein eS8 family. As to quaternary structure, part of the 30S ribosomal subunit.

This chain is Small ribosomal subunit protein eS8, found in Haloquadratum walsbyi (strain DSM 16790 / HBSQ001).